Consider the following 99-residue polypeptide: Transmembrane protein 14A (99 aa).

3 consecutive transmembrane segments (helical) span residues 1 to 21, 24 to 44, and 79 to 99; these read MDLIGFGYAALVTFGSIFGYK, GGVPSLIAGLFVGCLAGYGAY, and PAGLVAGLSLMMILRLVLLLL.

The protein belongs to the TMEM14 family. As to expression, expressed at significantly higher levels in ovarian cancer tissues than in normal tissues (at protein level).

Its subcellular location is the mitochondrion membrane. The protein localises to the endoplasmic reticulum membrane. In terms of biological role, inhibits apoptosis via negative regulation of the mitochondrial outer membrane permeabilization involved in apoptotic signaling pathway. In Homo sapiens (Human), this protein is Transmembrane protein 14A (TMEM14A).